We begin with the raw amino-acid sequence, 208 residues long: Mediator of RNA polymerase II transcription subunit 18 (208 aa).

The protein belongs to the Mediator complex subunit 18 family. In terms of assembly, component of the Mediator complex.

Its subcellular location is the nucleus. Its function is as follows. Component of the Mediator complex, a coactivator involved in the regulated transcription of nearly all RNA polymerase II-dependent genes. Mediator functions as a bridge to convey information from gene-specific regulatory proteins to the basal RNA polymerase II transcription machinery. Mediator is recruited to promoters by direct interactions with regulatory proteins and serves as a scaffold for the assembly of a functional preinitiation complex with RNA polymerase II and the general transcription factors. The sequence is that of Mediator of RNA polymerase II transcription subunit 18 (med18) from Xenopus laevis (African clawed frog).